The sequence spans 194 residues: Large ribosomal subunit protein bL9 (194 aa).

The segment covering 166–184 (AENQAQADEQAGELAAAAA) has biased composition (low complexity). A disordered region spans residues 166–194 (AENQAQADEQAGELAAAAAERGDMGGDEE). Basic and acidic residues predominate over residues 185 to 194 (ERGDMGGDEE).

It belongs to the bacterial ribosomal protein bL9 family.

In terms of biological role, binds to the 23S rRNA. This Hyphomonas neptunium (strain ATCC 15444) protein is Large ribosomal subunit protein bL9.